We begin with the raw amino-acid sequence, 694 residues long: Putative L-type lectin-domain containing receptor kinase II.2 (694 aa).

An N-terminal signal peptide occupies residues 1 to 24 (MAGVLRSLRFWMIICVQVLSLVLA). The Extracellular segment spans residues 25–318 (QDRDEFVYHD…PTSRSKDSKN (294 aa)). Residues 27–272 (RDEFVYHDFS…DQYILGWSFK (246 aa)) form a legume-lectin like region. 10 N-linked (GlcNAc...) asparagine glycosylation sites follow: Asn-57, Asn-58, Asn-73, Asn-131, Asn-172, Asn-183, Asn-201, Asn-208, Asn-240, and Asn-246. The segment at 283-314 (SKILDPPNRPPPPSSPPPPPPPPPTPPTSRSK) is disordered. A compositionally biased stretch (pro residues) spans 289–309 (PNRPPPPSSPPPPPPPPPTPP). A helical transmembrane segment spans residues 319–339 (IIIICVTVTSIAFLLMLGGFL). Topologically, residues 340–694 (YLYKKKKYAE…EDVTILFGGR (355 aa)) are cytoplasmic. The region spanning 375–650 (FRENRLLGAG…IQYLEGNATI (276 aa)) is the Protein kinase domain. Residues 381–389 (LGAGGFGKV) and Lys-403 contribute to the ATP site. Residue Asp-500 is the Proton acceptor of the active site.

It in the C-terminal section; belongs to the protein kinase superfamily. Ser/Thr protein kinase family. This sequence in the N-terminal section; belongs to the leguminous lectin family.

It is found in the cell membrane. It carries out the reaction L-seryl-[protein] + ATP = O-phospho-L-seryl-[protein] + ADP + H(+). It catalyses the reaction L-threonyl-[protein] + ATP = O-phospho-L-threonyl-[protein] + ADP + H(+). This Arabidopsis thaliana (Mouse-ear cress) protein is Putative L-type lectin-domain containing receptor kinase II.2 (LECRK22).